The following is a 187-amino-acid chain: Dirigent protein 23 (187 aa).

The first 24 residues, 1–24, serve as a signal peptide directing secretion; the sequence is MAKEEYVSRMLVMLIMIMPLVAQG. A glycan (N-linked (GlcNAc...) asparagine) is linked at asparagine 182.

The protein belongs to the plant dirigent protein family. In terms of assembly, homodimer.

The protein resides in the secreted. It is found in the extracellular space. It localises to the apoplast. Dirigent proteins impart stereoselectivity on the phenoxy radical-coupling reaction, yielding optically active lignans from two molecules of coniferyl alcohol in the biosynthesis of lignans, flavonolignans, and alkaloids and thus plays a central role in plant secondary metabolism. In Arabidopsis thaliana (Mouse-ear cress), this protein is Dirigent protein 23 (DIR23).